Consider the following 183-residue polypeptide: MSELPKWHGTTILSVRKGGKVVVIGDGQVSMGNTVMKPNARKVRKLGDGSVIGGFAGATADAFTLFDRLERKLEQHGGQLLRAAVELAKDWRTDKYLRNLEAMMIVADREVTLILTGNGDVLEPVGGVAAIGSGGNFALSAARALVDYEADAETICRKAMAIAADLCVFTNDSLTIETLDSAA.

Residue Thr-10 is part of the active site. Positions 164, 167, and 170 each coordinate Na(+).

It belongs to the peptidase T1B family. HslV subfamily. A double ring-shaped homohexamer of HslV is capped on each side by a ring-shaped HslU homohexamer. The assembly of the HslU/HslV complex is dependent on binding of ATP.

It localises to the cytoplasm. The catalysed reaction is ATP-dependent cleavage of peptide bonds with broad specificity.. Allosterically activated by HslU binding. Functionally, protease subunit of a proteasome-like degradation complex believed to be a general protein degrading machinery. The sequence is that of ATP-dependent protease subunit HslV from Rhizorhabdus wittichii (strain DSM 6014 / CCUG 31198 / JCM 15750 / NBRC 105917 / EY 4224 / RW1) (Sphingomonas wittichii).